The primary structure comprises 97 residues: MKRICSIYKSPRKNEMYLYVLKADGLERVPEGLLPFFGTPMHAFDLVLSPERKLAREDITKVLENLDNQGYHLQMPPAEDEYIEHLPEELLRRNDPV.

The YcgL domain maps to 3 to 87; sequence RICSIYKSPR…AEDEYIEHLP (85 aa).

The sequence is that of YcgL domain-containing protein PputGB1_4120 from Pseudomonas putida (strain GB-1).